We begin with the raw amino-acid sequence, 221 residues long: Large ribosomal subunit protein uL4 (221 aa).

Residues 46–74 (AGTASTKTRSEVSGGGRKPWPQKHTGRAR) are disordered.

Belongs to the universal ribosomal protein uL4 family. As to quaternary structure, part of the 50S ribosomal subunit.

One of the primary rRNA binding proteins, this protein initially binds near the 5'-end of the 23S rRNA. It is important during the early stages of 50S assembly. It makes multiple contacts with different domains of the 23S rRNA in the assembled 50S subunit and ribosome. In terms of biological role, forms part of the polypeptide exit tunnel. The protein is Large ribosomal subunit protein uL4 of Petrotoga mobilis (strain DSM 10674 / SJ95).